Consider the following 686-residue polypeptide: Aminodeoxychorismate synthase (686 aa).

One can recognise a Glutamine amidotransferase type-1 domain in the interval 2–194 (RTLLIDNYDS…RDLALAHHRA (193 aa)). Cys81 serves as the catalytic Nucleophile. Catalysis depends on residues His168 and Glu170. Residues 233–686 (LDSSSVLEGA…LDGSAVAGAR (454 aa)) are PABB component.

The protein in the C-terminal section; belongs to the anthranilate synthase component I family.

The catalysed reaction is chorismate + L-glutamine = 4-amino-4-deoxychorismate + L-glutamate. Its pathway is antibiotic biosynthesis. Its function is as follows. Involved in chloramphenicol biosynthesis. Catalyzes the biosynthesis of 4-amino-4-deoxychorismate (ADC) from chorismate and glutamine. In Streptomyces venezuelae (strain ATCC 10712 / CBS 650.69 / DSM 40230 / JCM 4526 / NBRC 13096 / PD 04745), this protein is Aminodeoxychorismate synthase.